A 235-amino-acid chain; its full sequence is ATP phosphoribosyltransferase (235 aa).

Belongs to the ATP phosphoribosyltransferase family. Short subfamily. Heteromultimer composed of HisG and HisZ subunits.

It is found in the cytoplasm. The catalysed reaction is 1-(5-phospho-beta-D-ribosyl)-ATP + diphosphate = 5-phospho-alpha-D-ribose 1-diphosphate + ATP. The protein operates within amino-acid biosynthesis; L-histidine biosynthesis; L-histidine from 5-phospho-alpha-D-ribose 1-diphosphate: step 1/9. Its function is as follows. Catalyzes the condensation of ATP and 5-phosphoribose 1-diphosphate to form N'-(5'-phosphoribosyl)-ATP (PR-ATP). Has a crucial role in the pathway because the rate of histidine biosynthesis seems to be controlled primarily by regulation of HisG enzymatic activity. This Synechococcus sp. (strain JA-2-3B'a(2-13)) (Cyanobacteria bacterium Yellowstone B-Prime) protein is ATP phosphoribosyltransferase.